The chain runs to 324 residues: Protein FAM228B (324 aa).

Belongs to the FAM228 family.

The protein is Protein FAM228B (FAM228B) of Homo sapiens (Human).